Consider the following 206-residue polypeptide: N-(5'-phosphoribosyl)anthranilate isomerase (206 aa).

The protein belongs to the TrpF family.

The enzyme catalyses N-(5-phospho-beta-D-ribosyl)anthranilate = 1-(2-carboxyphenylamino)-1-deoxy-D-ribulose 5-phosphate. Its pathway is amino-acid biosynthesis; L-tryptophan biosynthesis; L-tryptophan from chorismate: step 3/5. The protein is N-(5'-phosphoribosyl)anthranilate isomerase of Azotobacter vinelandii (strain DJ / ATCC BAA-1303).